The primary structure comprises 92 residues: Large ribosomal subunit protein bL25 (92 aa).

Belongs to the bacterial ribosomal protein bL25 family. As to quaternary structure, part of the 50S ribosomal subunit; part of the 5S rRNA/L5/L18/L25 subcomplex. Contacts the 5S rRNA. Binds to the 5S rRNA independently of L5 and L18.

Its function is as follows. This is one of the proteins that binds to the 5S RNA in the ribosome where it forms part of the central protuberance. The sequence is that of Large ribosomal subunit protein bL25 from Aliivibrio fischeri (strain ATCC 700601 / ES114) (Vibrio fischeri).